A 340-amino-acid chain; its full sequence is Solute carrier family 35 member G3 (340 aa).

A disordered region spans residues 11–33; that stretch reads PDFTQPSPPSTPASLPSKHHHRC. Helical transmembrane passes span 39-59, 69-89, 107-127, 160-180, 189-209, 223-243, 257-277, 283-303, and 307-327; these read TKGLFVALLGGGLSAGFVGPF, LPSLELLIFRCLFHLPIALLL, FLHAILNVLSIGCAYSAVQVV, AWCGLFGSTLGLIIIVGPGLG, LYTALGYVLAFLGGLALSLGL, TVAFLFGLVGLMVSVPGLFVL, CVVAVGLLALVSFVCVSYAVT, LVCAVLHSEVVVALMLQYYVL, and VAPSDIMGAGVVLGSIAIITA. In terms of domain architecture, EamA 1 spans 51–176; that stretch reads LSAGFVGPFS…STLGLIIIVG (126 aa). Residues 274-327 enclose the EamA 2 domain; sequence YAVTKAHPALVCAVLHSEVVVALMLQYYVLYETVAPSDIMGAGVVLGSIAIITA.

It belongs to the SLC35G solute transporter family.

The protein resides in the membrane. In Mus musculus (Mouse), this protein is Solute carrier family 35 member G3 (Slc35g3).